We begin with the raw amino-acid sequence, 118 residues long: Non-specific lipid-transfer protein 1 (118 aa).

Positions 1–25 (MAGVMKLACLLLACMIVAGPITSNA) are cleaved as a signal peptide. 4 cysteine pairs are disulfide-bonded: C29-C76, C39-C53, C54-C100, and C74-C114.

This sequence belongs to the plant LTP family. As to expression, expressed primarily in epidermal cells.

The protein resides in the secreted. Its subcellular location is the cell wall. Its function is as follows. Plant non-specific lipid-transfer proteins transfer phospholipids as well as galactolipids across membranes. May play a role in wax or cutin deposition in the cell walls of expanding epidermal cells and certain secretory tissues. In Arabidopsis thaliana (Mouse-ear cress), this protein is Non-specific lipid-transfer protein 1 (LTP1).